A 1145-amino-acid polypeptide reads, in one-letter code: Cellulose synthase-like protein D3 (1145 aa).

Residues 1–19 (MASNNHFMNSRSNLSTNSD) are compositionally biased toward polar residues. Disordered stretches follow at residues 1 to 38 (MASN…TFAR) and 189 to 208 (DNNK…SKMD). 2 helical membrane passes run 289–309 (VISP…LFLM) and 319–339 (AIWL…SWLL). The active site involves Asp419. Ser755 carries the phosphoserine modification. Residue Asp848 is part of the active site. 6 helical membrane passes run 930-950 (FFLI…QFIV), 956-976 (TFLV…LLEI), 1002-1022 (LAAV…SFTL), 1045-1065 (SLMI…AVGF), 1079-1099 (LIGG…FAKG), and 1109-1129 (TIVY…WVAI).

Belongs to the glycosyltransferase 2 family. Plant cellulose synthase-like D subfamily. Preferentially expressed in root hair cells. Expressed in roots, leaves, stems, flowers and siliques.

It is found in the golgi apparatus membrane. Functionally, thought to be a Golgi-localized beta-glycan synthase that polymerize the backbones of noncellulosic polysaccharides (hemicelluloses) of plant cell wall. Required for synthesis of a cell wall polysaccharide essential for root hair elongation, but not initiation. May be the functional ortholog of rice CSLD1. In Arabidopsis thaliana (Mouse-ear cress), this protein is Cellulose synthase-like protein D3 (CSLD3).